The chain runs to 61 residues: UPF0434 protein PST_2635 (61 aa).

The protein belongs to the UPF0434 family.

This chain is UPF0434 protein PST_2635, found in Stutzerimonas stutzeri (strain A1501) (Pseudomonas stutzeri).